The following is a 294-amino-acid chain: Phosphatidylserine decarboxylase proenzyme (294 aa).

Catalysis depends on charge relay system; for autoendoproteolytic cleavage activity residues Asp100, His157, and Ser261. Ser261 acts as the Schiff-base intermediate with substrate; via pyruvic acid; for decarboxylase activity in catalysis. Ser261 carries the pyruvic acid (Ser); by autocatalysis modification.

The protein belongs to the phosphatidylserine decarboxylase family. PSD-B subfamily. Prokaryotic type I sub-subfamily. In terms of assembly, heterodimer of a large membrane-associated beta subunit and a small pyruvoyl-containing alpha subunit. It depends on pyruvate as a cofactor. Is synthesized initially as an inactive proenzyme. Formation of the active enzyme involves a self-maturation process in which the active site pyruvoyl group is generated from an internal serine residue via an autocatalytic post-translational modification. Two non-identical subunits are generated from the proenzyme in this reaction, and the pyruvate is formed at the N-terminus of the alpha chain, which is derived from the carboxyl end of the proenzyme. The autoendoproteolytic cleavage occurs by a canonical serine protease mechanism, in which the side chain hydroxyl group of the serine supplies its oxygen atom to form the C-terminus of the beta chain, while the remainder of the serine residue undergoes an oxidative deamination to produce ammonia and the pyruvoyl prosthetic group on the alpha chain. During this reaction, the Ser that is part of the protease active site of the proenzyme becomes the pyruvoyl prosthetic group, which constitutes an essential element of the active site of the mature decarboxylase.

Its subcellular location is the cell membrane. It carries out the reaction a 1,2-diacyl-sn-glycero-3-phospho-L-serine + H(+) = a 1,2-diacyl-sn-glycero-3-phosphoethanolamine + CO2. Its pathway is phospholipid metabolism; phosphatidylethanolamine biosynthesis; phosphatidylethanolamine from CDP-diacylglycerol: step 2/2. In terms of biological role, catalyzes the formation of phosphatidylethanolamine (PtdEtn) from phosphatidylserine (PtdSer). The polypeptide is Phosphatidylserine decarboxylase proenzyme (Histophilus somni (strain 129Pt) (Haemophilus somnus)).